Consider the following 24-residue polypeptide: 47 kDa cell wall protein (24 aa).

It is found in the secreted. Its subcellular location is the cell wall. In Nicotiana tabacum (Common tobacco), this protein is 47 kDa cell wall protein.